The primary structure comprises 482 residues: GTPase Der (482 aa).

EngA-type G domains are found at residues 3 to 166 and 195 to 368; these read PVVA…SEQF and IKLA…NSAT. GTP contacts are provided by residues 9–16, 56–60, 118–121, 201–208, 248–252, and 313–316; these read GRPNVGKS, DTGGI, NKVD, GKPNVGKS, DTAGV, and NKWD. Residues 369–453 form the KH-like domain; that stretch reads KRINTSMLTR…PIKVEFREGA (85 aa).

The protein belongs to the TRAFAC class TrmE-Era-EngA-EngB-Septin-like GTPase superfamily. EngA (Der) GTPase family. Associates with the 50S ribosomal subunit.

Its function is as follows. GTPase that plays an essential role in the late steps of ribosome biogenesis. This chain is GTPase Der, found in Pseudoalteromonas atlantica (strain T6c / ATCC BAA-1087).